Consider the following 359-residue polypeptide: MQTTIQQRSGASAWQQFCEWVTSTDNRLYVGWFGVLMIPTLLAATTCFIVAFIAAPPVDIDGIREPVAGSLLYGNNIISGAVVPSSNAIGLHFYPIWEAASLDEWLYNGGPFQLVIFHFLIGIYAYMGREWELSYRLGMRPWICIAYSAPVAAASAVFLVYPFGQGSFSDAMPLGISGTFNYMLVFQAEHNILMHPFHMLGVAGVFGGSLFSAMHGSLVTSSLVRETTESESQNYGYKFGQEEETYNIVAAHGYFGRLIFQYASFNNSRSLHFFLAAWPVVGIWFTALGVSTMAFNLNGFNFNQSILDSQGRVLNTWADILNRAGLGMEVMHERNAHNFPLDLAAAESAPVALQAPAIG.

The next 3 membrane-spanning stretches (helical) occupy residues 29-46, 118-133, and 142-156; these read YVGW…AATT, HFLI…EWEL, and WICI…AASA. His-118 provides a ligand contact to chlorophyll a. Tyr-126 is a pheophytin a binding site. Residues Asp-170 and Glu-189 each coordinate [CaMn4O5] cluster. Residues 197 to 218 traverse the membrane as a helical segment; that stretch reads FHMLGVAGVFGGSLFSAMHGSL. Chlorophyll a is bound at residue His-198. A quinone-binding positions include His-215 and 264 to 265; that span reads SF. His-215 is a binding site for Fe cation. His-272 contributes to the Fe cation binding site. The helical transmembrane segment at 274 to 288 threads the bilayer; the sequence is FLAAWPVVGIWFTAL. His-332, Glu-333, Asp-342, and Ala-344 together coordinate [CaMn4O5] cluster. The propeptide occupies 345–359; sequence AAESAPVALQAPAIG.

It belongs to the reaction center PufL/M/PsbA/D family. PSII is composed of 1 copy each of membrane proteins PsbA, PsbB, PsbC, PsbD, PsbE, PsbF, PsbH, PsbI, PsbJ, PsbK, PsbL, PsbM, PsbT, PsbX, PsbY, PsbZ, Psb30/Ycf12, peripheral proteins PsbO, CyanoQ (PsbQ), PsbU, PsbV and a large number of cofactors. It forms dimeric complexes. Requires The D1/D2 heterodimer binds P680, chlorophylls that are the primary electron donor of PSII, and subsequent electron acceptors. It shares a non-heme iron and each subunit binds pheophytin, quinone, additional chlorophylls, carotenoids and lipids. D1 provides most of the ligands for the Mn4-Ca-O5 cluster of the oxygen-evolving complex (OEC). There is also a Cl(-1) ion associated with D1 and D2, which is required for oxygen evolution. The PSII complex binds additional chlorophylls, carotenoids and specific lipids. as cofactor. In terms of processing, tyr-161 forms a radical intermediate that is referred to as redox-active TyrZ, YZ or Y-Z. Post-translationally, C-terminally processed by CtpA; processing is essential to allow assembly of the oxygen-evolving complex and thus photosynthetic growth.

The protein localises to the cellular thylakoid membrane. It catalyses the reaction 2 a plastoquinone + 4 hnu + 2 H2O = 2 a plastoquinol + O2. Photosystem II (PSII) is a light-driven water:plastoquinone oxidoreductase that uses light energy to abstract electrons from H(2)O, generating O(2) and a proton gradient subsequently used for ATP formation. It consists of a core antenna complex that captures photons, and an electron transfer chain that converts photonic excitation into a charge separation. The D1/D2 (PsbA/PsbD) reaction center heterodimer binds P680, the primary electron donor of PSII as well as several subsequent electron acceptors. The polypeptide is Photosystem II protein D1 1 (Synechococcus sp. (strain RCC307)).